The primary structure comprises 93 residues: uncharacterized protein (93 aa).

This is an uncharacterized protein from Methanocaldococcus jannaschii (strain ATCC 43067 / DSM 2661 / JAL-1 / JCM 10045 / NBRC 100440) (Methanococcus jannaschii).